We begin with the raw amino-acid sequence, 847 residues long: Glucans biosynthesis glucosyltransferase H (847 aa).

The Cytoplasmic portion of the chain corresponds to 1-138; that stretch reads MNKTTEYIDA…KWRTVGTIRR (138 aa). Residues 139–156 form a helical membrane-spanning segment; the sequence is YILLILTLAQTVVATWYM. The Periplasmic segment spans residues 157–193; the sequence is KTILPYQGWALINPMDMVGQDIWVSFMQLLPYMLQTG. The helical transmembrane segment at 194-216 threads the bilayer; it reads ILILFAVLFCWVSAGFWTALMGF. Topologically, residues 217–511 are cytoplasmic; the sequence is LQLLIGRDKY…LVKGMHPVHR (295 aa). Residues 512–534 form a helical membrane-spanning segment; it reads AVFLTGVMSYLSAPLWFMFLALS. The Periplasmic segment spans residues 535–567; the sequence is TALQVVHALTEPQYFLQPRQLFPVWPQWRPELA. Residues 568–590 traverse the membrane as a helical segment; the sequence is IALFASTMVLLFLPKLLSIMLIW. Residues 591-602 lie on the Cytoplasmic side of the membrane; the sequence is CKGTKEYGGFWR. A helical membrane pass occupies residues 603–625; it reads VTLSLLLEVLFSVLLAPVRMLFH. Residues 626-679 lie on the Periplasmic side of the membrane; the sequence is TVFVVSAFLGWEVVWNSPQRDDDSTPWGEAFMRHGSQLLLGLVWAVGMAWLDLR. The helical transmembrane segment at 680 to 702 threads the bilayer; that stretch reads FLFWLAPIVFSLILSPFVSVISS. Residues 703–847 lie on the Cytoplasmic side of the membrane; sequence RSTVGLRTKR…ALQGRTSSAR (145 aa).

This sequence belongs to the glycosyltransferase 2 family. OpgH subfamily.

The protein localises to the cell inner membrane. It participates in glycan metabolism; osmoregulated periplasmic glucan (OPG) biosynthesis. Involved in the biosynthesis of osmoregulated periplasmic glucans (OPGs). This is Glucans biosynthesis glucosyltransferase H from Salmonella typhimurium (strain LT2 / SGSC1412 / ATCC 700720).